The sequence spans 121 residues: Small ribosomal subunit protein uS13 (121 aa).

Positions 95–121 are disordered; the sequence is LPMRGQRTRTNARTRKGPRKAAASLKK.

Belongs to the universal ribosomal protein uS13 family. As to quaternary structure, part of the 30S ribosomal subunit. Forms a loose heterodimer with protein S19. Forms two bridges to the 50S subunit in the 70S ribosome.

Its function is as follows. Located at the top of the head of the 30S subunit, it contacts several helices of the 16S rRNA. In the 70S ribosome it contacts the 23S rRNA (bridge B1a) and protein L5 of the 50S subunit (bridge B1b), connecting the 2 subunits; these bridges are implicated in subunit movement. Contacts the tRNAs in the A and P-sites. In Polaromonas naphthalenivorans (strain CJ2), this protein is Small ribosomal subunit protein uS13.